The following is a 339-amino-acid chain: DnaJ homolog subfamily C member 22 (339 aa).

The 47-residue stretch at 4–50 (GLLMTYVLWALGGPVGLHHLYLGRDSHALLWMLTLGGGGLGWLWEFW) folds into the TM2 domain. Transmembrane regions (helical) follow at residues 5–25 (LLMT…HLYL), 30–50 (HALL…WEFW), 81–101 (FASQ…SLSS), 105–125 (FYIV…AAVG), 135–155 (LGAA…ILPI), 185–205 (VGLA…YNTA), and 218–238 (FLSW…VLLL). A J domain is found at 277–339 (LAHQVLGVPE…LSQPKKPRAS (63 aa)).

The protein localises to the membrane. In terms of biological role, may function as a co-chaperone. This Mus musculus (Mouse) protein is DnaJ homolog subfamily C member 22 (Dnajc22).